Here is a 228-residue protein sequence, read N- to C-terminus: Phosphoglycolate phosphatase (228 aa).

Residue D9 is the Nucleophile of the active site. Mg(2+)-binding residues include D9 and D11. Position 151 (K151) interacts with substrate. Mg(2+)-binding residues include D174 and D178.

Belongs to the archaeal SPP-like hydrolase family. It depends on Mg(2+) as a cofactor.

It catalyses the reaction 2-phosphoglycolate + H2O = glycolate + phosphate. Functionally, catalyzes the dephosphorylation of 2-phosphoglycolate. The protein is Phosphoglycolate phosphatase of Pyrobaculum neutrophilum (strain DSM 2338 / JCM 9278 / NBRC 100436 / V24Sta) (Thermoproteus neutrophilus).